The primary structure comprises 274 residues: Thiamine kinase (274 aa).

This sequence belongs to the thiamine kinase family.

The catalysed reaction is thiamine + ATP = thiamine phosphate + ADP + H(+). It participates in cofactor biosynthesis; thiamine diphosphate biosynthesis; thiamine phosphate from thiamine: step 1/1. Its function is as follows. Catalyzes the ATP-dependent phosphorylation of thiamine to thiamine phosphate. Is involved in thiamine salvage. The protein is Thiamine kinase of Escherichia coli O17:K52:H18 (strain UMN026 / ExPEC).